Here is a 143-residue protein sequence, read N- to C-terminus: Crossover junction endodeoxyribonuclease Hjc (143 aa).

Glu12 provides a ligand contact to Mg(2+). Ser32 is an active-site residue. Asp42 and Glu55 together coordinate Mg(2+).

Belongs to the Holliday junction resolvase Hjc family. As to quaternary structure, homodimer. Interacts with PCNA subunit PCNA1. The cofactor is Mg(2+).

It carries out the reaction Endonucleolytic cleavage at a junction such as a reciprocal single-stranded crossover between two homologous DNA duplexes (Holliday junction).. With respect to regulation, autoinhibits at very high concentrations, possibly because of extreme junction distortion. Inhibition (and activity at low concentrations of enzyme) is stimulated by dsDNA and Sso7d. Activity stimulated by PCNA subunit PCNA1. Functionally, a structure-specific endonuclease that resolves Holliday junction (HJ) intermediates during genetic recombination; may have some degree of sequence preference in a mobile junction. Cleaves 4-way DNA junctions introducing paired nicks in opposing strands, leaving a 5'-terminal phosphate and a 3'-terminal hydroxyl group that are subsequently ligated to produce recombinant products. Can cleave all 4 strands 3 bases 3' of the junction center. Cleaves both mobile and immobile junctions. Modifies the structure of the 4-way DNA junction, a model Holliday junction structure. The protein forms multiple complexes with 4-way DNA, suggesting more than 1 homodimer can bind to each junction. This chain is Crossover junction endodeoxyribonuclease Hjc, found in Saccharolobus solfataricus (strain ATCC 35092 / DSM 1617 / JCM 11322 / P2) (Sulfolobus solfataricus).